The primary structure comprises 156 residues: Ribosomal RNA large subunit methyltransferase H (156 aa).

S-adenosyl-L-methionine-binding positions include Leu73, Gly104, and 123 to 128; that span reads LSALTL.

This sequence belongs to the RNA methyltransferase RlmH family. In terms of assembly, homodimer.

Its subcellular location is the cytoplasm. It carries out the reaction pseudouridine(1915) in 23S rRNA + S-adenosyl-L-methionine = N(3)-methylpseudouridine(1915) in 23S rRNA + S-adenosyl-L-homocysteine + H(+). In terms of biological role, specifically methylates the pseudouridine at position 1915 (m3Psi1915) in 23S rRNA. The polypeptide is Ribosomal RNA large subunit methyltransferase H (Shewanella putrefaciens (strain CN-32 / ATCC BAA-453)).